Consider the following 303-residue polypeptide: Sulfotransferase 6B1 (303 aa).

65-70 (KCGSNW) is a binding site for 3'-phosphoadenylyl sulfate. The Proton acceptor role is filled by His-118. Residues Arg-140, Ser-148, Tyr-203, 237 to 242 (STFQAM), and 259 to 261 (RKG) contribute to the 3'-phosphoadenylyl sulfate site.

Belongs to the sulfotransferase 1 family. As to expression, specifically expressed in kidney and testis.

The protein localises to the cytoplasm. It is found in the cytosol. It carries out the reaction thyroxine + 3'-phosphoadenylyl sulfate = thyroxine sulfate + adenosine 3',5'-bisphosphate + H(+). Functionally, sulfotransferase that utilizes 3'-phospho-5'-adenylyl sulfate (PAPS) as sulfonate donor to catalyze the sulfate conjugation of thyroxine. Involved in the metabolism of thyroxine. The polypeptide is Sulfotransferase 6B1 (SULT6B1) (Homo sapiens (Human)).